We begin with the raw amino-acid sequence, 242 residues long: Pyridoxine 5'-phosphate synthase (242 aa).

Asn7 is a binding site for 3-amino-2-oxopropyl phosphate. Residue 9-10 (DH) coordinates 1-deoxy-D-xylulose 5-phosphate. Arg18 is a binding site for 3-amino-2-oxopropyl phosphate. The active-site Proton acceptor is the His43. 1-deoxy-D-xylulose 5-phosphate-binding residues include Arg45 and His50. Glu70 serves as the catalytic Proton acceptor. Thr100 provides a ligand contact to 1-deoxy-D-xylulose 5-phosphate. His191 functions as the Proton donor in the catalytic mechanism. 3-amino-2-oxopropyl phosphate is bound by residues Gly192 and 213–214 (GH).

This sequence belongs to the PNP synthase family. In terms of assembly, homooctamer; tetramer of dimers.

It is found in the cytoplasm. It catalyses the reaction 3-amino-2-oxopropyl phosphate + 1-deoxy-D-xylulose 5-phosphate = pyridoxine 5'-phosphate + phosphate + 2 H2O + H(+). It functions in the pathway cofactor biosynthesis; pyridoxine 5'-phosphate biosynthesis; pyridoxine 5'-phosphate from D-erythrose 4-phosphate: step 5/5. Functionally, catalyzes the complicated ring closure reaction between the two acyclic compounds 1-deoxy-D-xylulose-5-phosphate (DXP) and 3-amino-2-oxopropyl phosphate (1-amino-acetone-3-phosphate or AAP) to form pyridoxine 5'-phosphate (PNP) and inorganic phosphate. This is Pyridoxine 5'-phosphate synthase from Chromobacterium violaceum (strain ATCC 12472 / DSM 30191 / JCM 1249 / CCUG 213 / NBRC 12614 / NCIMB 9131 / NCTC 9757 / MK).